Consider the following 372-residue polypeptide: Ciliary neurotrophic factor receptor subunit alpha (372 aa).

A signal peptide spans 1 to 22 (MAAPVPWACCAVLAAAAAVVYA). The region spanning 27–104 (PQEAPHVQYE…WHLRHQVLLH (78 aa)) is the Ig-like C2-type domain. The cysteines at positions 46 and 89 are disulfide-linked. 4 N-linked (GlcNAc...) asparagine glycosylation sites follow: N60, N70, N142, and N190. 2 Fibronectin type-III domains span residues 108–205 (PPRE…VKPD) and 206–306 (PPEN…TEEP). The short motif at 290-294 (WSDWS) is the WSXWS motif element. Residues 301–340 (PWTEEPRHLTTEAQAAETTTSTTSSLAPPPTTKICDPGEL) form a disordered region. A compositionally biased stretch (low complexity) spans 311 to 326 (TEAQAAETTTSTTSSL). S342 carries GPI-anchor amidated serine lipidation. A propeptide spans 343 to 372 (GGGPSAPFLVSVPITLALAAAAATASSLLI) (removed in mature form).

Belongs to the type I cytokine receptor family. Type 3 subfamily. Forms a heterotrimer with LIFR and IL6ST. Interacts with heterodimeric neurotropic cytokine composed of CLCF1/CLC and CRLF1/CLF-1. Either alone or in complex with the heterodimer CLCF1-CRLF1 interacts with SORL1; this interaction may promote internalization and lysosomal degradation. Component of a receptor complex composed of IL6ST/GP130, IL27RA/WSX1 and CNTFR which interacts with the neuroprotective peptide humanin. In terms of tissue distribution, nervous system and skeletal muscle.

The protein localises to the cell membrane. Its function is as follows. Binds to CNTF. The alpha subunit provides the receptor specificity. Receptor for heterodimeric neurotropic cytokine composed of CLCF1/CLC and CRLF1/CLF-1. Acts as a receptor for the neuroprotective peptide humanin as part of a complex with IL6ST/GP130 and IL27RA/WSX1. The protein is Ciliary neurotrophic factor receptor subunit alpha (CNTFR) of Homo sapiens (Human).